The primary structure comprises 147 residues: Lysozyme C (147 aa).

The N-terminal stretch at 1-18 is a signal peptide; it reads MKALVILGFLFLSVAVQG. The C-type lysozyme domain maps to 19–147; it reads KVFERCELAR…VSSYVEGCTL (129 aa). 4 disulfides stabilise this stretch: C24-C145, C48-C133, C83-C99, and C95-C113. Residues E53 and D71 contribute to the active site.

It belongs to the glycosyl hydrolase 22 family. In terms of assembly, monomer. In terms of tissue distribution, stomach-specific.

The enzyme catalyses Hydrolysis of (1-&gt;4)-beta-linkages between N-acetylmuramic acid and N-acetyl-D-glucosamine residues in a peptidoglycan and between N-acetyl-D-glucosamine residues in chitodextrins.. Its function is as follows. Lysozymes have primarily a bacteriolytic function; those in tissues and body fluids are associated with the monocyte-macrophage system and enhance the activity of immunoagents. This is Lysozyme C (LYZ1) from Bos taurus (Bovine).